The chain runs to 831 residues: Periplasmic nitrate reductase (831 aa).

Positions 1–29 form a signal peptide, tat-type signal; that stretch reads MTLTRRDLIKAQAAATAAAAAGLPVSALA. The region spanning 41–97 is the 4Fe-4S Mo/W bis-MGD-type domain; the sequence is IRWSKAPCRFCGTGCGVMVGTRDGQVVATHGDTQAEVNRGLNCVKGYFLSKIMYGED. Residues Cys-48, Cys-51, Cys-55, and Cys-83 each contribute to the [4Fe-4S] cluster site. Mo-bis(molybdopterin guanine dinucleotide) contacts are provided by residues Lys-85, Gln-152, Asn-177, Cys-181, 214–221, 245–249, 264–266, Met-375, Gln-379, Asn-485, 511–512, Lys-534, Asp-561, and 721–730; these read WGSNMAEM, STFTH, GTD, SD, and TGRVLEHWHS. Trp-797 lines the substrate pocket. Mo-bis(molybdopterin guanine dinucleotide) is bound by residues Asn-805 and Lys-822.

Belongs to the prokaryotic molybdopterin-containing oxidoreductase family. NasA/NapA/NarB subfamily. Component of the periplasmic nitrate reductase NapAB complex composed of NapA and NapB. Requires [4Fe-4S] cluster as cofactor. The cofactor is Mo-bis(molybdopterin guanine dinucleotide). Post-translationally, predicted to be exported by the Tat system. The position of the signal peptide cleavage has not been experimentally proven.

Its subcellular location is the periplasm. It catalyses the reaction 2 Fe(II)-[cytochrome] + nitrate + 2 H(+) = 2 Fe(III)-[cytochrome] + nitrite + H2O. In terms of biological role, catalytic subunit of the periplasmic nitrate reductase complex NapAB. Receives electrons from NapB and catalyzes the reduction of nitrate to nitrite. This Cereibacter sphaeroides (strain ATCC 17023 / DSM 158 / JCM 6121 / CCUG 31486 / LMG 2827 / NBRC 12203 / NCIMB 8253 / ATH 2.4.1.) (Rhodobacter sphaeroides) protein is Periplasmic nitrate reductase.